Consider the following 162-residue polypeptide: NADH-quinone oxidoreductase subunit I (162 aa).

4Fe-4S ferredoxin-type domains are found at residues 52 to 82 and 93 to 122; these read LRRY…IEAG and TRYD…EGPN. [4Fe-4S] cluster is bound by residues Cys62, Cys65, Cys68, Cys72, Cys102, Cys105, Cys108, and Cys112.

This sequence belongs to the complex I 23 kDa subunit family. NDH-1 is composed of 14 different subunits. Subunits NuoA, H, J, K, L, M, N constitute the membrane sector of the complex. Requires [4Fe-4S] cluster as cofactor.

The protein resides in the cell inner membrane. It carries out the reaction a quinone + NADH + 5 H(+)(in) = a quinol + NAD(+) + 4 H(+)(out). Functionally, NDH-1 shuttles electrons from NADH, via FMN and iron-sulfur (Fe-S) centers, to quinones in the respiratory chain. The immediate electron acceptor for the enzyme in this species is believed to be ubiquinone. Couples the redox reaction to proton translocation (for every two electrons transferred, four hydrogen ions are translocated across the cytoplasmic membrane), and thus conserves the redox energy in a proton gradient. The protein is NADH-quinone oxidoreductase subunit I of Methylorubrum extorquens (strain PA1) (Methylobacterium extorquens).